The sequence spans 772 residues: Protocadherin beta-6 (772 aa).

A signal peptide spans 1–28; it reads METTLAKTPEKRQVVFLAILLLLWEAGS. Cadherin domains are found at residues 31 to 133, 134 to 242, 243 to 346, 347 to 450, and 451 to 560; these read IRYS…SPEF, PDTE…APEF, VQSL…APKL, TISS…APAF, and TQTS…APFI. Topologically, residues 31–690 are extracellular; that stretch reads IRYSIPEETE…QDEDMLTLYL (660 aa). A disulfide bridge connects residues cysteine 96 and cysteine 102. Asparagine 169 is a glycosylation site (N-linked (GlcNAc...) asparagine). O-linked (Man) serine glycosylation is present at serine 223. Threonine 225 is a glycosylation site (O-linked (Man) threonine). The N-linked (GlcNAc...) asparagine glycan is linked to asparagine 417. A glycan (N-linked (GlcNAc...) asparagine) is linked at asparagine 566. The region spanning 575–675 is the Cadherin 6 domain; sequence LPRAAEPGYL…SQPYLPLPEV (101 aa). Residues 691-711 traverse the membrane as a helical segment; that stretch reads VIALASVSSLFLLSVLLFVGV. Residues 712–772 lie on the Cytoplasmic side of the membrane; the sequence is RLCRRVREAS…DFKFLNHYSQ (61 aa).

As to quaternary structure, forms homodimers in trans (molecules expressed by two different cells). Forms promiscuous heterodimers in cis (at the plasma membrane of the same cell) with other protocadherins.

It is found in the cell membrane. Calcium-dependent cell-adhesion protein involved in cells self-recognition and non-self discrimination. Thereby, it is involved in the establishment and maintenance of specific neuronal connections in the brain. The chain is Protocadherin beta-6 from Mus musculus (Mouse).